Here is a 2137-residue protein sequence, read N- to C-terminus: Pecanex-like protein 2 (2137 aa).

The next 2 membrane-spanning stretches (helical) occupy residues 34–54 and 57–77; these read CHLY…LAFP and AIIV…IKLV. 4 disordered regions span residues 92–163, 225–251, 402–530, and 545–572; these read QQKP…LELS, NGKG…VDKG, EKTS…HARV, and SAEI…QMPN. A compositionally biased stretch (basic and acidic residues) spans 96–114; sequence SRKEEKPNKDKEAKGEHIT. The segment covering 116–125 has biased composition (polar residues); it reads HRNPSNNRQI. N-linked (GlcNAc...) asparagine glycosylation is present at Asn136. The segment covering 146–156 has biased composition (polar residues); that stretch reads SRGQSITSHHS. A glycan (N-linked (GlcNAc...) asparagine) is linked at Asn449. Positions 479–490 are enriched in basic and acidic residues; it reads IKDHSSSSREPW. The span at 510-520 shows a compositional bias: polar residues; the sequence is GQTNLDPSSCK. Asn550, Asn572, Asn587, Asn598, and Asn613 each carry an N-linked (GlcNAc...) asparagine glycan. Residues 593 to 602 are compositionally biased toward polar residues; sequence ASSQLNGSAE. A disordered region spans residues 593 to 612; that stretch reads ASSQLNGSAEQNEESGLLRD. Disordered stretches follow at residues 621 to 655 and 740 to 763; these read EILE…CTQP and AREM…SGDP. Polar residues predominate over residues 630–655; that stretch reads GHSSKQGKPDLQSQDHTSTGPACTQP. Residues 746-760 show a composition bias toward low complexity; that stretch reads SSSSTTTSESQDPSS. Helical transmembrane passes span 844-864, 868-888, 901-921, 952-972, 983-1003, 1029-1049, 1099-1119, 1124-1144, 1193-1213, 1237-1257, 1265-1285, 1302-1322, and 1324-1344; these read LAIL…SQGF, MWVL…LKSV, QIIT…ILLL, YLIV…FPQI, IDML…VYSV, HIPA…YHLS, LIVC…TVFL, FLSI…HYVL, YILY…LISN, SFCN…FFHF, SFLL…DLLH, GSSF…MLFF, and TIAT…VIFI. 3 N-linked (GlcNAc...) asparagine glycosylation sites follow: Asn1412, Asn1553, and Asn1818. The disordered stretch occupies residues 1876-1958; the sequence is RQHSGGNIED…RPPMLSSSGP (83 aa). Polar residues-rich tracts occupy residues 1901–1910, 1920–1929, and 1937–1958; these read SGGSQESSAE, GVSSCEGTQR, and SQSV…SSGP. A glycan (N-linked (GlcNAc...) asparagine) is linked at Asn2054.

This sequence belongs to the pecanex family.

Its subcellular location is the membrane. May play a role in tumorigenesis of colorectal carcinomas with high microsatellite instability (MSI-H). The protein is Pecanex-like protein 2 of Homo sapiens (Human).